The chain runs to 210 residues: Secreted isochorismatase effector Isc1 (210 aa).

Active-site residues include D25, K90, and C124.

This sequence belongs to the isochorismatase family.

The protein resides in the secreted. It is found in the host cytoplasm. Its subcellular location is the host nucleus. The catalysed reaction is isochorismate + H2O = (2S,3S)-2,3-dihydroxy-2,3-dihydrobenzoate + pyruvate. Functionally, secreted isochorismatase required for full virulence of P.sojae. Suppresses salicylate-mediated innate immunity of the host by disrupting the plant salicylate metabolism pathway via hydrolysis of its isochorismate precursor. The polypeptide is Secreted isochorismatase effector Isc1 (Phytophthora sojae (strain P6497) (Soybean stem and root rot agent)).